Reading from the N-terminus, the 295-residue chain is Glycine--tRNA ligase alpha subunit (295 aa).

It belongs to the class-II aminoacyl-tRNA synthetase family. Tetramer of two alpha and two beta subunits.

Its subcellular location is the cytoplasm. It catalyses the reaction tRNA(Gly) + glycine + ATP = glycyl-tRNA(Gly) + AMP + diphosphate. The polypeptide is Glycine--tRNA ligase alpha subunit (Shouchella clausii (strain KSM-K16) (Alkalihalobacillus clausii)).